The chain runs to 166 residues: Transcription antitermination protein NusB (166 aa).

A compositionally biased stretch (basic and acidic residues) spans M1 to D18. The tract at residues M1–R28 is disordered.

This sequence belongs to the NusB family.

In terms of biological role, involved in transcription antitermination. Required for transcription of ribosomal RNA (rRNA) genes. Binds specifically to the boxA antiterminator sequence of the ribosomal RNA (rrn) operons. In Pseudomonas putida (strain W619), this protein is Transcription antitermination protein NusB.